A 131-amino-acid polypeptide reads, in one-letter code: Small ribosomal subunit protein uS11 (131 aa).

This sequence belongs to the universal ribosomal protein uS11 family. Part of the 30S ribosomal subunit. Interacts with proteins S7 and S18. Binds to IF-3.

Located on the platform of the 30S subunit, it bridges several disparate RNA helices of the 16S rRNA. Forms part of the Shine-Dalgarno cleft in the 70S ribosome. This is Small ribosomal subunit protein uS11 from Saccharophagus degradans (strain 2-40 / ATCC 43961 / DSM 17024).